Consider the following 280-residue polypeptide: MVARRRKCAARDPEDRIPSPLGYAAIPIKFSEKQQASHYLYVRAHGVRQGTKSTWPQKRTLFVLNVPPYCTEESLSRLLSTCGLVQSVELQEKPDLAESPKESRSKFFHPKPVPGFQVAYVVFQKPSGVSAALALKGPLLVSTESHPVKSGIHKWISDYADSVPDPEALRVEVDTFMEAYDQKIAEEEAKAKEEEGVPDEEGWVKVTRRGRRPVLPRTEAASLRVLERERRKRSRKELLNFYAWQHRESKMEHLAQLRKKFEEDKQRIELLRAQRKFRPY.

One can recognise an RRM domain in the interval 59-159 (RTLFVLNVPP…SGIHKWISDY (101 aa)). S99 is modified (phosphoserine).

It belongs to the RRP7 family. In terms of assembly, part of the small subunit (SSU) processome, composed of more than 70 proteins and the RNA chaperone small nucleolar RNA (snoRNA) U3. Interacts with NOL6; required for NOL6 localization to nucleolus. In terms of tissue distribution, expressed in the apical radial glial cells in the developing brain.

It localises to the nucleus. The protein resides in the nucleolus. It is found in the cell projection. Its subcellular location is the cilium. The protein localises to the cytoplasm. It localises to the cytoskeleton. The protein resides in the microtubule organizing center. It is found in the centrosome. Functionally, nucleolar protein that is involved in ribosomal RNA (rRNA) processing. Also plays a role in primary cilia resorption, and cell cycle progression in neurogenesis and neocortex development. Part of the small subunit (SSU) processome, first precursor of the small eukaryotic ribosomal subunit. During the assembly of the SSU processome in the nucleolus, many ribosome biogenesis factors, an RNA chaperone and ribosomal proteins associate with the nascent pre-rRNA and work in concert to generate RNA folding, modifications, rearrangements and cleavage as well as targeted degradation of pre-ribosomal RNA by the RNA exosome. This Homo sapiens (Human) protein is Ribosomal RNA-processing protein 7 homolog A.